Reading from the N-terminus, the 432-residue chain is Ornithine aminotransferase, mitochondrial (432 aa).

Residue K287 is modified to N6-(pyridoxal phosphate)lysine.

This sequence belongs to the class-III pyridoxal-phosphate-dependent aminotransferase family. Homotetramer. Requires pyridoxal 5'-phosphate as cofactor.

The protein localises to the mitochondrion matrix. The catalysed reaction is a 2-oxocarboxylate + L-ornithine = L-glutamate 5-semialdehyde + an L-alpha-amino acid. Its pathway is amino-acid biosynthesis; L-proline biosynthesis; L-glutamate 5-semialdehyde from L-ornithine: step 1/1. The polypeptide is Ornithine aminotransferase, mitochondrial (Oat) (Drosophila ananassae (Fruit fly)).